The sequence spans 391 residues: Succinate--CoA ligase [ADP-forming] subunit beta (391 aa).

The region spanning 9–248 is the ATP-grasp domain; that stretch reads KDILRKFGVA…ITEEDPFEVE (240 aa). Residues Lys50, 57–59, Glu103, Met106, and Glu111 contribute to the ATP site; that span reads GRG. Mg(2+)-binding residues include Asn203 and Asp217. Substrate is bound by residues Asn268 and 325–327; that span reads GIV.

This sequence belongs to the succinate/malate CoA ligase beta subunit family. Heterotetramer of two alpha and two beta subunits. Mg(2+) is required as a cofactor.

The catalysed reaction is succinate + ATP + CoA = succinyl-CoA + ADP + phosphate. It carries out the reaction GTP + succinate + CoA = succinyl-CoA + GDP + phosphate. It functions in the pathway carbohydrate metabolism; tricarboxylic acid cycle; succinate from succinyl-CoA (ligase route): step 1/1. Functionally, succinyl-CoA synthetase functions in the citric acid cycle (TCA), coupling the hydrolysis of succinyl-CoA to the synthesis of either ATP or GTP and thus represents the only step of substrate-level phosphorylation in the TCA. The beta subunit provides nucleotide specificity of the enzyme and binds the substrate succinate, while the binding sites for coenzyme A and phosphate are found in the alpha subunit. The chain is Succinate--CoA ligase [ADP-forming] subunit beta from Chlorobium phaeovibrioides (strain DSM 265 / 1930) (Prosthecochloris vibrioformis (strain DSM 265)).